Here is a 30-residue protein sequence, read N- to C-terminus: Hainantoxin F7-28.42 (30 aa).

In terms of tissue distribution, expressed by the venom gland.

It is found in the secreted. The polypeptide is Hainantoxin F7-28.42 (Cyriopagopus hainanus (Chinese bird spider)).